Consider the following 537-residue polypeptide: Arginine--tRNA ligase (537 aa).

Residues 113-123 (ANPTGELHLGH) carry the 'HIGH' region motif.

The protein belongs to the class-I aminoacyl-tRNA synthetase family. As to quaternary structure, monomer.

It localises to the cytoplasm. It catalyses the reaction tRNA(Arg) + L-arginine + ATP = L-arginyl-tRNA(Arg) + AMP + diphosphate. The chain is Arginine--tRNA ligase (argS) from Mycoplasma pneumoniae (strain ATCC 29342 / M129 / Subtype 1) (Mycoplasmoides pneumoniae).